We begin with the raw amino-acid sequence, 619 residues long: Replication restart protein PriA (619 aa).

One can recognise a Helicase ATP-binding domain in the interval 119–285 (LKELQKHSAS…KDKALVRLKG (167 aa)). 132 to 139 (GDTGSGKT) contributes to the ATP binding site. The DEAH box motif lies at 228-231 (DEEH). Residues Cys-336, Cys-339, Cys-345, Cys-348, Cys-363, Cys-366, Cys-376, and Cys-379 each contribute to the Zn(2+) site. The region spanning 371–532 (PIPKICSACQ…ELYPPFSRLC (162 aa)) is the Helicase C-terminal domain.

It belongs to the helicase family. PriA subfamily. Component of the replication restart primosome. Zn(2+) serves as cofactor.

The catalysed reaction is Couples ATP hydrolysis with the unwinding of duplex DNA by translocating in the 3'-5' direction.. The enzyme catalyses ATP + H2O = ADP + phosphate + H(+). Functionally, initiates the restart of stalled replication forks, which reloads the replicative helicase on sites other than the origin of replication. Recognizes and binds to abandoned replication forks and remodels them to uncover a helicase loading site. Promotes assembly of the primosome at these replication forks. Important for survival of the bacteria in host cells. The protein is Replication restart protein PriA of Helicobacter pylori (strain ATCC 700392 / 26695) (Campylobacter pylori).